The sequence spans 466 residues: Asparagine--tRNA ligase (466 aa).

The protein belongs to the class-II aminoacyl-tRNA synthetase family. In terms of assembly, homodimer.

The protein resides in the cytoplasm. The catalysed reaction is tRNA(Asn) + L-asparagine + ATP = L-asparaginyl-tRNA(Asn) + AMP + diphosphate + H(+). The polypeptide is Asparagine--tRNA ligase (Shewanella loihica (strain ATCC BAA-1088 / PV-4)).